A 721-amino-acid polypeptide reads, in one-letter code: Catalase-peroxidase 1 (721 aa).

Positions 98 to 223 (WHAAGSYRVA…LAAVQMGLIY (126 aa)) form a cross-link, tryptophyl-tyrosyl-methioninium (Trp-Tyr) (with M-249). H99 acts as the Proton acceptor in catalysis. A cross-link (tryptophyl-tyrosyl-methioninium (Tyr-Met) (with W-98)) is located at residues 223–249 (YVNPEGVNGQPDPLRTAQDVRVTFGRM). H264 is a binding site for heme b.

Belongs to the peroxidase family. Peroxidase/catalase subfamily. As to quaternary structure, homodimer or homotetramer. Heme b serves as cofactor. Formation of the three residue Trp-Tyr-Met cross-link is important for the catalase, but not the peroxidase activity of the enzyme.

It catalyses the reaction H2O2 + AH2 = A + 2 H2O. It carries out the reaction 2 H2O2 = O2 + 2 H2O. In terms of biological role, bifunctional enzyme with both catalase and broad-spectrum peroxidase activity. In Legionella pneumophila (strain Paris), this protein is Catalase-peroxidase 1.